Here is a 420-residue protein sequence, read N- to C-terminus: Glycogen synthase kinase-3 beta (420 aa).

Polar residues predominate over residues 1-22 (MSGRPRTTSFAESCKPVQQPSA). Residues 1-35 (MSGRPRTTSFAESCKPVQQPSAFGSMKVSRDKDGS) are disordered. Serine 9 carries the phosphoserine; by PKB/AKT1, RPS6KA3 and SGK3 modification. The S-palmitoyl cysteine moiety is linked to residue cysteine 14. The Protein kinase domain occupies 56 to 340 (YTDTKVIGNG…PLEACAHSFF (285 aa)). ATP is bound by residues 62–70 (IGNGSFGVV) and lysine 85. Aspartate 181 serves as the catalytic Proton acceptor. Tyrosine 216 is modified (phosphotyrosine). 2 stretches are compositionally biased toward low complexity: residues 387-401 (AAST…SDAN) and 409-420 (NNAAFASASNST). The disordered stretch occupies residues 387–420 (AASTPTNATAASDANAGDRGQTNNAAFASASNST). Residue serine 389 is modified to Phosphoserine. The residue at position 390 (threonine 390) is a Phosphothreonine.

Belongs to the protein kinase superfamily. CMGC Ser/Thr protein kinase family. GSK-3 subfamily. In terms of assembly, monomer. Interacts with DAB2IP (via C2 domain); the interaction stimulates GSK3B kinase activation. Interacts (via C2 domain) with PPP2CA. Interacts with ARRB2, AXIN1, CABYR, DISC1, MMP2, MUC1, NIN, PRUNE1 and ZBED3. Interacts with AXIN1; the interaction mediates hyperphosphorylation of CTNNB1 leading to its ubiquitination and destruction. Interacts with and phosphorylates SNAI1. Interacts with DNM1L (via a C-terminal domain). Found in a complex composed of MACF1, APC, AXIN1, CTNNB1 and GSK3B. Interacts with SGK3. Interacts with the CLOCK-BMAL1 heterodimer. Interacts with the BMAL1. Interacts with CTNND2. The complex composed, at least, of APC, CTNNB1 and GSK3B interacts with JPT1; the interaction requires the inactive form of GSK3B (phosphorylated at 'Ser-9'). Forms a complex composed of PRKAR2A or PRKAR2B, GSK3B and GSKIP through GSKIP interaction; facilitates PKA-induced phosphorylation and regulates GSK3B activity. Interacts with GSKIP. Interacts with GID8. Interacts with PIWIL2. Interacts with LMBR1L. Interacts with DDX3X. Interacts with BIRC2. Interacts with TNFRSF10B; TNFRSF10B stimulation inhibits GSK3B kinase activity. Found in a complex with SLC39A6, SLC39A10 and with GSK3B that controls NCAM1 phosphorylation. Interacts with PKP3 (via ARM repeats); the interaction may be involved in PKP3 protein degradation. In terms of processing, phosphorylated by AKT1 and ILK1. Upon insulin-mediated signaling, the activated PKB/AKT1 and RPS6KA3 protein kinases phosphorylate and deactivate GSK3B, resulting in the dephosphorylation and activation of GYS1. Activated by phosphorylation at Tyr-216. Inactivated by phosphorylation at Ser-9. Mono-ADP-ribosylation by PARP10 negatively regulates kinase activity. Post-translationally, palmitoylated. Palmitoylation by ZDHHC4 prevents AKT1-mediated phosphorylation.

It is found in the cytoplasm. The protein resides in the nucleus. It localises to the cell membrane. The enzyme catalyses L-seryl-[tau protein] + ATP = O-phospho-L-seryl-[tau protein] + ADP + H(+). It carries out the reaction L-threonyl-[tau protein] + ATP = O-phospho-L-threonyl-[tau protein] + ADP + H(+). It catalyses the reaction L-seryl-[protein] + ATP = O-phospho-L-seryl-[protein] + ADP + H(+). The catalysed reaction is L-threonyl-[protein] + ATP = O-phospho-L-threonyl-[protein] + ADP + H(+). Activated by phosphorylation at Tyr-216. In response to insulin, inhibited by phosphorylation at Ser-9 by PKB/AKT1; phosphorylation at this site causes a conformational change, preventing access of substrates to the active site. Inhibited by IL22 treatment which also triggers phosphorylation at Ser-9, promoting inactivation. Inhibited by lithium. Constitutively active protein kinase that acts as a negative regulator in the hormonal control of glucose homeostasis, Wnt signaling and regulation of transcription factors and microtubules, by phosphorylating and inactivating glycogen synthase (GYS1 or GYS2), EIF2B, CTNNB1/beta-catenin, APC, AXIN1, DPYSL2/CRMP2, JUN, NFATC1/NFATC, MAPT/TAU and MACF1. Requires primed phosphorylation of the majority of its substrates. In skeletal muscle, contributes to insulin regulation of glycogen synthesis by phosphorylating and inhibiting GYS1 activity and hence glycogen synthesis. May also mediate the development of insulin resistance by regulating activation of transcription factors. Regulates protein synthesis by controlling the activity of initiation factor 2B (EIF2BE/EIF2B5) in the same manner as glycogen synthase. In Wnt signaling, GSK3B forms a multimeric complex with APC, AXIN1 and CTNNB1/beta-catenin and phosphorylates the N-terminus of CTNNB1 leading to its degradation mediated by ubiquitin/proteasomes. Phosphorylates JUN at sites proximal to its DNA-binding domain, thereby reducing its affinity for DNA. Phosphorylates NFATC1/NFATC on conserved serine residues promoting NFATC1/NFATC nuclear export, shutting off NFATC1/NFATC gene regulation, and thereby opposing the action of calcineurin. Phosphorylates MAPT/TAU on 'Thr-548', decreasing significantly MAPT/TAU ability to bind and stabilize microtubules. MAPT/TAU is the principal component of neurofibrillary tangles in Alzheimer disease. Plays an important role in ERBB2-dependent stabilization of microtubules at the cell cortex. Phosphorylates MACF1, inhibiting its binding to microtubules which is critical for its role in bulge stem cell migration and skin wound repair. Probably regulates NF-kappa-B (NFKB1) at the transcriptional level and is required for the NF-kappa-B-mediated anti-apoptotic response to TNF-alpha (TNF/TNFA). Negatively regulates replication in pancreatic beta-cells, resulting in apoptosis, loss of beta-cells and diabetes. Through phosphorylation of the anti-apoptotic protein MCL1, may control cell apoptosis in response to growth factors deprivation. Phosphorylates MUC1 in breast cancer cells, decreasing the interaction of MUC1 with CTNNB1/beta-catenin. Is necessary for the establishment of neuronal polarity and axon outgrowth. Phosphorylates MARK2, leading to inhibition of its activity. Phosphorylates SIK1 at 'Thr-182', leading to sustainment of its activity. Phosphorylates ZC3HAV1 which enhances its antiviral activity. Phosphorylates SNAI1, leading to its ubiquitination and proteasomal degradation. Phosphorylates SFPQ at 'Thr-687' upon T-cell activation. Phosphorylates NR1D1 st 'Ser-55' and 'Ser-59' and stabilizes it by protecting it from proteasomal degradation. Regulates the circadian clock via phosphorylation of the major clock components including BMAL1, CLOCK and PER2. Phosphorylates CLOCK AT 'Ser-427' and targets it for proteasomal degradation. Phosphorylates BMAL1 at 'Ser-17' and 'Ser-21' and primes it for ubiquitination and proteasomal degradation. Phosphorylates FBXL2 at 'Thr-404' and primes it for ubiquitination by the SCF(FBXO3) complex and proteasomal degradation. Phosphorylates OGT at 'Ser-3' or 'Ser-4' which positively regulates its activity. Phosphorylates MYCN in neuroblastoma cells which may promote its degradation. Regulates the circadian rhythmicity of hippocampal long-term potentiation and BMAL1 and PER2 expression. Acts as a regulator of autophagy by mediating phosphorylation of KAT5/TIP60 under starvation conditions, activating KAT5/TIP60 acetyltransferase activity and promoting acetylation of key autophagy regulators, such as ULK1 and RUBCNL/Pacer. Negatively regulates extrinsic apoptotic signaling pathway via death domain receptors. Promotes the formation of an anti-apoptotic complex, made of DDX3X, BRIC2 and GSK3B, at death receptors, including TNFRSF10B. The anti-apoptotic function is most effective with weak apoptotic signals and can be overcome by stronger stimulation. Phosphorylates E2F1, promoting the interaction between E2F1 and USP11, stabilizing E2F1 and promoting its activity. Phosphorylates mTORC2 complex component RICTOR at 'Ser-1235' in response to endoplasmic stress, inhibiting mTORC2. Phosphorylates FXR1, promoting FXR1 ubiquitination by the SCF(FBXO4) complex and FXR1 degradation by the proteasome. Phosphorylates interleukin-22 receptor subunit IL22RA1, preventing its proteasomal degradation. This is Glycogen synthase kinase-3 beta from Spermophilus citellus (European ground squirrel).